Here is a 506-residue protein sequence, read N- to C-terminus: Zinc finger and SCAN domain containing protein 4F (506 aa).

The disordered stretch occupies residues 1-24 (MASQQAPAKDLQTNNLEFTPTDSS). Residues 37–119 (SAQLNFSPSN…RFMESLTDEC (83 aa)) form the SCAN box domain. C2H2-type zinc fingers lie at residues 395–417 (YKCEECSRMFKHARSLSSHQRTH), 424–446 (LLCVTCQKMFKRVSDRRTHEIIH), 452–474 (FKCSTCEKSFSHKTNLKSHEMIH), and 480–503 (YVCSLCSRRFRQSSTYHRHLRNYH).

Up-regulated in blastocyst outgrowths and is detectable in a mosaic fashion in ES cultures.

Its subcellular location is the nucleus. It is found in the chromosome. The protein resides in the telomere. In terms of biological role, transcription factor required to regulate early development. Binds telomeres and plays a key role in genomic stability by regulating telomere elongation. Acts as an activator of spontaneous telomere sister chromatid exchange (T-SCE) and telomere elongation. The protein is Zinc finger and SCAN domain containing protein 4F (Zscan4f) of Mus musculus (Mouse).